The following is a 64-amino-acid chain: Large ribosomal subunit protein eL37 (64 aa).

Residues Cys20, Cys23, Cys35, and Cys38 each coordinate Zn(2+). The C4-type zinc-finger motif lies at 20–38 (CRRCGRRSFHVRKKVCAAC).

Belongs to the eukaryotic ribosomal protein eL37 family. Zn(2+) is required as a cofactor.

Binds to the 23S rRNA. The polypeptide is Large ribosomal subunit protein eL37 (Methanococcus maripaludis (strain C5 / ATCC BAA-1333)).